We begin with the raw amino-acid sequence, 221 residues long: GTP cyclohydrolase III (221 aa).

It belongs to the archaeal-type GTP cyclohydrolase family.

It carries out the reaction GTP + 3 H2O = 2-amino-5-formylamino-6-(5-phospho-D-ribosylamino)pyrimidin-4(3H)-one + 2 phosphate + 2 H(+). In terms of biological role, catalyzes the formation of 2-amino-5-formylamino-6-ribofuranosylamino-4(3H)-pyrimidinone ribonucleotide monophosphate and inorganic phosphate from GTP. Also has an independent pyrophosphate phosphohydrolase activity. This Pyrobaculum arsenaticum (strain DSM 13514 / JCM 11321 / PZ6) protein is GTP cyclohydrolase III.